We begin with the raw amino-acid sequence, 91 residues long: UPF0367 protein cce_2199 (91 aa).

This sequence belongs to the UPF0367 family.

The protein is UPF0367 protein cce_2199 of Crocosphaera subtropica (strain ATCC 51142 / BH68) (Cyanothece sp. (strain ATCC 51142)).